Reading from the N-terminus, the 110-residue chain is UPF0060 membrane protein Pcryo_1341 (110 aa).

A run of 4 helical transmembrane segments spans residues 7 to 27 (VGLF…PYLW), 33 to 53 (SIWL…LLTL), 63 to 83 (AAYG…VDGI), and 87 to 107 (TWDI…MFAP).

This sequence belongs to the UPF0060 family.

It localises to the cell inner membrane. In Psychrobacter cryohalolentis (strain ATCC BAA-1226 / DSM 17306 / VKM B-2378 / K5), this protein is UPF0060 membrane protein Pcryo_1341.